The sequence spans 245 residues: Orotidine 5'-phosphate decarboxylase (245 aa).

Substrate contacts are provided by residues Asp-22, Lys-44, 71–80, Thr-131, Arg-192, Gln-201, Gly-221, and Arg-222; that span reads DLKFHDIPNT. The active-site Proton donor is Lys-73.

It belongs to the OMP decarboxylase family. Type 1 subfamily. In terms of assembly, homodimer.

It carries out the reaction orotidine 5'-phosphate + H(+) = UMP + CO2. It participates in pyrimidine metabolism; UMP biosynthesis via de novo pathway; UMP from orotate: step 2/2. Its function is as follows. Catalyzes the decarboxylation of orotidine 5'-monophosphate (OMP) to uridine 5'-monophosphate (UMP). This is Orotidine 5'-phosphate decarboxylase from Salmonella choleraesuis (strain SC-B67).